Here is a 130-residue protein sequence, read N- to C-terminus: Small ribosomal subunit protein uS8 (130 aa).

This sequence belongs to the universal ribosomal protein uS8 family. Part of the 30S ribosomal subunit. Contacts proteins S5 and S12.

Functionally, one of the primary rRNA binding proteins, it binds directly to 16S rRNA central domain where it helps coordinate assembly of the platform of the 30S subunit. The polypeptide is Small ribosomal subunit protein uS8 (Shewanella halifaxensis (strain HAW-EB4)).